We begin with the raw amino-acid sequence, 473 residues long: 7-dehydrocholesterol reductase (473 aa).

The tract at residues 1-20 (MGERRRANASRGDKKVANGE) is disordered. The next 6 helical transmembrane spans lie at 36–56 (FSLASVIFLLAFAPLIVYYFV), 97–117 (IYLAWVSFQVFLYMFLPDILH), 175–195 (WIPLLWCANLLGYSVATFALV), 264–284 (VTNSMILVNVLQAIYVVDFFW), 304–324 (LGWGDCVWLPYLYTLQGLYLV), and 329–349 (ELSTTAAVAVLLLGLIGYYIF). Residues K356, R360, M393, W398, and 405-406 (NY) contribute to the NADP(+) site. The chain crosses the membrane as a helical span at residues 419–439 (ACGFDHLLPYFYFIYMTILLV). Residues D445, 449–453 (CSSKY), and Y460 contribute to the NADP(+) site.

Belongs to the ERG4/ERG24 family.

It is found in the endoplasmic reticulum membrane. It carries out the reaction cholesterol + NADP(+) = 7-dehydrocholesterol + NADPH + H(+). It catalyses the reaction 7-dehydrodesmosterol + NADPH + H(+) = desmosterol + NADP(+). Its pathway is steroid biosynthesis; cholesterol biosynthesis. Catalyzes the last step of the cholesterol synthesis pathway, which transforms cholesta-5,7-dien-3beta-ol (7-dehydrocholesterol,7-DHC) into cholesterol by reducing the C7-C8 double bond of its sterol core. Can also metabolize cholesta-5,7,24-trien-3beta-ol (7-dehydrodemosterol, 7-DHD) to desmosterol, which is then metabolized by the Delta(24)-sterol reductase (DHCR24) to cholesterol. Modulates ferroptosis (a form of regulated cell death driven by iron-dependent lipid peroxidation) through the metabolic breakdown of the anti-ferroptotic metabolites 7-DHC and 7-DHD which, when accumulated, divert the propagation of peroxyl radical-mediated damage from phospholipid components to its sterol core, protecting plasma and mitochondrial membranes from phospholipid autoxidation. This chain is 7-dehydrocholesterol reductase (dhcr7), found in Xenopus laevis (African clawed frog).